Here is a 382-residue protein sequence, read N- to C-terminus: Queuine tRNA-ribosyltransferase (382 aa).

Asp-96 serves as the catalytic Proton acceptor. Residues 96 to 100 (DSGGF), Asp-151, Gln-194, and Gly-221 contribute to the substrate site. Residues 252 to 258 (GVGAPDS) are RNA binding. Asp-271 acts as the Nucleophile in catalysis. The segment at 276-280 (TRIAR) is RNA binding; important for wobble base 34 recognition. The Zn(2+) site is built by Cys-309, Cys-311, Cys-314, and His-340.

It belongs to the queuine tRNA-ribosyltransferase family. As to quaternary structure, homodimer. Within each dimer, one monomer is responsible for RNA recognition and catalysis, while the other monomer binds to the replacement base PreQ1. Zn(2+) serves as cofactor.

The enzyme catalyses 7-aminomethyl-7-carbaguanine + guanosine(34) in tRNA = 7-aminomethyl-7-carbaguanosine(34) in tRNA + guanine. Its pathway is tRNA modification; tRNA-queuosine biosynthesis. Its function is as follows. Catalyzes the base-exchange of a guanine (G) residue with the queuine precursor 7-aminomethyl-7-deazaguanine (PreQ1) at position 34 (anticodon wobble position) in tRNAs with GU(N) anticodons (tRNA-Asp, -Asn, -His and -Tyr). Catalysis occurs through a double-displacement mechanism. The nucleophile active site attacks the C1' of nucleotide 34 to detach the guanine base from the RNA, forming a covalent enzyme-RNA intermediate. The proton acceptor active site deprotonates the incoming PreQ1, allowing a nucleophilic attack on the C1' of the ribose to form the product. After dissociation, two additional enzymatic reactions on the tRNA convert PreQ1 to queuine (Q), resulting in the hypermodified nucleoside queuosine (7-(((4,5-cis-dihydroxy-2-cyclopenten-1-yl)amino)methyl)-7-deazaguanosine). This Lactococcus lactis subsp. cremoris (strain MG1363) protein is Queuine tRNA-ribosyltransferase.